Reading from the N-terminus, the 598-residue chain is MALRCPIVSVLGHVDHGKTSLLDKIRRTRVTQREAGGITQHIGASEIPINTIKKVSKDLLGLFKADLSIPGILVIDTPGHEAFTSLRKRGGALADIAILVVDINEGFKPQTIEAINILKQCKTPFIVAANKVDRIPGWNSSEGPFILNFNEKNQHPNAMTEFEIRLYENIIKHLNELGFDADLFSRVKDTTKTINVVPVSAMTGEGVPDLLVIISGLAQKFLEQKLALNVEGYAKGTVLELKEEKGLGKTIDAIIYDGIAKTGDFLVVGNPDGVIVSKIKALLKPKELDEMRDPKDKFKPSKQISAATGVKISAPDLDSVIAGSPLRIVPKNQVDAAKEEVLQEVEEFTILTDDEGIIIKADTMGSLEALANELRKVNAKIKKAEVGDISKKDVIEASSYASSNPLNGLIISFNTKVLADAKAEIEKSDVKLLEGKIIYKLVEEYEEWTKEMEELMKSDEINRLTKPAMIKILPNCIFRQKEPAVCGVEVLYGTLKIGSPIMSEDGKKLGYVKEMRDSQQENIKEAKVGMQVPVSIDGNIVLGRNAKENDILYVEVPEPEARKLHHEFKDELRGDEKEALSRYMELKQKIENNIFWGM.

Residues 3–225 form the tr-type G domain; the sequence is LRCPIVSVLG…GLAQKFLEQK (223 aa). The segment at 12 to 19 is G1; that stretch reads GHVDHGKT. Residue 12–19 coordinates GTP; the sequence is GHVDHGKT. Residues 37–41 form a G2 region; that stretch reads GITQH. A G3 region spans residues 76–79; sequence DTPG. Residues 76 to 80 and 130 to 133 each bind GTP; these read DTPGH and NKVD. Positions 130–133 are G4; that stretch reads NKVD. The tract at residues 200–202 is G5; it reads SAM.

This sequence belongs to the TRAFAC class translation factor GTPase superfamily. Classic translation factor GTPase family. IF-2 subfamily.

Its function is as follows. Function in general translation initiation by promoting the binding of the formylmethionine-tRNA to ribosomes. Seems to function along with eIF-2. The chain is Probable translation initiation factor IF-2 from Methanococcus maripaludis (strain C5 / ATCC BAA-1333).